The sequence spans 572 residues: MKAFSSYDEKPPAPPIRFSSSATRENQVVGLKPLPKEPEATKKKKTMPNPFMKKNKDKKEASEKPVISRPSNFEHTIHVGYDPKTGEFTGMPEAWARLLTDSQISKQEQQQNPQAVLDALKYYTQGESSGQKWLQYDMMFIDDAPSRTPSYGLKPQPYSTSSLPYHGNKIQDPRKMNPMTTSTSSAGYNSKQGVPPTTFSVNENRSSMPPSYAPPPVPHGETPADIVPPAIPDRPARTLSIYTKPKEEEEKIPDLSKGQFGVQARGQKAKKKMTDAEVLTKLRTIVSIGNPDRKYRKVDKIGSGASGSVYTAIEISTEAEVAIKQMNLKDQPKKELIINEILVMRENKHANIVNYLDSYLVCDELWVVMEYLAGGSLTDVVTECQMEDGIIAAVCREVLQALEFLHSRHVIHRDIKSDNILLGMDGSVKLTDFGFCAQLSPEQRKRTTMVGTPYWMAPEVVTRKQYGPKVDVWSLGIMAIEMVEGEPPYLNENPLRAIYLIATNGKPDFPGRDSMTLLFKDFVDSALEVQVENRWSASQLLTHPFLRCAKPLASLYYLIVAAKKSIAEASNS.

2 disordered regions span residues 1 to 71 (MKAF…SRPS) and 156 to 195 (QPYSTSSLPYHGNKIQDPRKMNPMTTSTSSAGYNSKQGVP). The CRIB domain maps to 67–80 (ISRPSNFEHTIHVG). The tract at residues 81–294 (YDPKTGEFTG…IVSIGNPDRK (214 aa)) is linker. Positions 178–195 (PMTTSTSSAGYNSKQGVP) are enriched in polar residues. Residues 295-546 (YRKVDKIGSG…ASQLLTHPFL (252 aa)) enclose the Protein kinase domain. Residues 301-309 (IGSGASGSV) and lysine 324 contribute to the ATP site. Aspartate 414 (proton acceptor) is an active-site residue.

The protein belongs to the protein kinase superfamily. STE Ser/Thr protein kinase family. STE20 subfamily. As to quaternary structure, interacts with cdc-42 (GTP-bound form) and cedd-10 (GTP-bound form). Requires Mg(2+) as cofactor. It depends on Mn(2+) as a cofactor. Specifically colocalized with cdc-42 and ced-10 at all hypodermal cell boundaries during embryo elongation throughout the second phase of embryogenesis. Expressed mainly in pharyngeal muscles, the CAN neurons, motor neurons in the ventral nerve cord, several cells in the tail region (including the B and Y cells from L1 to adult, the hypodermal blast cell T in the L1 and some of its progeny in later stages), and the distal tip cells.

It is found in the cell membrane. It localises to the cytoplasm. Its subcellular location is the cell projection. The protein localises to the axon. The protein resides in the perikaryon. The enzyme catalyses L-seryl-[protein] + ATP = O-phospho-L-seryl-[protein] + ADP + H(+). It catalyses the reaction L-threonyl-[protein] + ATP = O-phospho-L-threonyl-[protein] + ADP + H(+). Its function is as follows. Required for hypodermal cell fusion, together with cdc-42 and ced-10, leading to embryonic body elongation, which involves dramatic cytoskeletal reorganization. Plays a redundant role with max-2 in dorsal axonal guidance in ventral cord commissural motoneurons and in P neuroblast migration. Acts probably downstream of Rho GTPases mig-2 and ced-10 to regulate these 2 processes. Involved in orientating axonal growth of HSN neurons. During gonad morphogenesis and probably in association with pix-1 and git-1, involved in the migration of distal tip cell (DTC) and in maintaining their sharp tapering morphology. In addition, plays a redundant role with max-2 in DTC-mediated guidance of gonad elongation. May phosphorylate mlc-4. The chain is Serine/threonine-protein kinase pak-1 (pak-1) from Caenorhabditis elegans.